An 85-amino-acid chain; its full sequence is Sec-independent protein translocase protein TatA (85 aa).

Residues 1–21 (MGSFSIWHWLIVLLIIMMVFG) form a helical membrane-spanning segment. Basic and acidic residues predominate over residues 39–51 (FKEGMREGSEDKP). Residues 39–85 (FKEGMREGSEDKPAGSQQGQQAAGQPPRELHDSTTIDVEARDKSKQG) form a disordered region. The span at 52–65 (AGSQQGQQAAGQPP) shows a compositional bias: low complexity. Basic and acidic residues predominate over residues 66–85 (RELHDSTTIDVEARDKSKQG).

It belongs to the TatA/E family. The Tat system comprises two distinct complexes: a TatABC complex, containing multiple copies of TatA, TatB and TatC subunits, and a separate TatA complex, containing only TatA subunits. Substrates initially bind to the TatABC complex, which probably triggers association of the separate TatA complex to form the active translocon.

The protein localises to the cell inner membrane. Part of the twin-arginine translocation (Tat) system that transports large folded proteins containing a characteristic twin-arginine motif in their signal peptide across membranes. TatA could form the protein-conducting channel of the Tat system. The polypeptide is Sec-independent protein translocase protein TatA (Ralstonia nicotianae (strain ATCC BAA-1114 / GMI1000) (Ralstonia solanacearum)).